The sequence spans 1189 residues: Nucleolar protein NET1 (1189 aa).

2 positions are modified to phosphoserine: Ser-60 and Ser-166. 2 disordered regions span residues 160–260 (SKLN…ISSG) and 345–1189 (TAQD…FKKK). Positions 166–180 (SPQSVQPQQQIPSSS) are enriched in low complexity. Polar residues predominate over residues 200–210 (IRSATNGSMRV). 2 positions are modified to phosphoserine: Ser-231 and Ser-252. A compositionally biased stretch (pro residues) spans 244-253 (LPPPTQPQSP). The span at 368–381 (PEPRISEIEKELKE) shows a compositional bias: basic and acidic residues. Over residues 391-407 (PAKAAKIPMKKPYLENG) the composition is skewed to low complexity. Residues 432–450 (ASLQRSQSSIADNNGSPVK) show a composition bias toward polar residues. A phosphoserine mark is found at Ser-437, Ser-439, Ser-447, and Ser-452. Residues 470-486 (ASNTSITKSSNGESWGK) show a composition bias toward polar residues. Ser-497 bears the Phosphoserine mark. Positions 526-543 (NQVREKEDTNDKLLEKEI) are enriched in basic and acidic residues. Acidic residues predominate over residues 590 to 601 (IEDDGNDNDEVD). Polar residues predominate over residues 641–657 (SRTSGNSKNSKPYTTVL). Over residues 659-668 (KDIDNSKPDP) the composition is skewed to basic and acidic residues. Thr-676 carries the post-translational modification Phosphothreonine. The span at 682 to 691 (KRAAQLLAGA) shows a compositional bias: low complexity. Basic and acidic residues predominate over residues 692-702 (KKNEVPQKSTE). The segment covering 710 to 725 (TDDESESGIETDFSSD) has biased composition (acidic residues). Residues 756 to 777 (KDSKIINKEVDEERNDKRDSQK) show a composition bias toward basic and acidic residues. A compositionally biased stretch (polar residues) spans 778-792 (KSAVSESSVTNSKIS). Residues 806-815 (KQNEATKVET) are compositionally biased toward basic and acidic residues. The segment covering 822 to 833 (SSFPVVGGSPSV) has biased composition (low complexity). Ser-830 carries the phosphoserine modification. Basic and acidic residues-rich tracts occupy residues 884–897 (DLNK…EPEK), 905–919 (ANDK…DSKS), and 945–954 (ANDKLKDLKA). The segment covering 969–999 (SNEKNNSSANDDDSSSSGSSTEDESSSSSSS) has biased composition (low complexity). Polar residues predominate over residues 1023–1039 (RSSSKIEAPSPSVNKKI). A Phosphothreonine modification is found at Thr-1042. Positions 1055–1070 (SSPPSVKSKTTSNPSS) are enriched in low complexity. 2 positions are modified to phosphoserine: Ser-1056 and Ser-1059. The segment covering 1095–1109 (PDVKEKTSKSNEKSQ) has biased composition (basic and acidic residues). Composition is skewed to low complexity over residues 1123–1137 (DSDS…SDSS) and 1158–1169 (SFISAKSASAAL).

This sequence to yeast YKR010c. In terms of assembly, component of the RENT complex which is composed of at least NET1, CDC14 and SIR2. Interacts with NSI1. Post-translationally, phosphorylated by CDC5.

It localises to the nucleus. It is found in the nucleolus. Functionally, has a role in chromosome maintenance and is involved in mitotic exit. Inhibits the action of CDC14 by sequestering it in the nucleolus. Also binds to RNA polymerase I and stimulates rRNA synthesis. Influences RDNA chromatin by tethering SIR2 to rDNA in the nucleolus. This chain is Nucleolar protein NET1 (NET1), found in Saccharomyces cerevisiae (strain ATCC 204508 / S288c) (Baker's yeast).